A 546-amino-acid chain; its full sequence is Chaperonin GroEL 4 (546 aa).

ATP contacts are provided by residues 30-33, K51, 87-91, G415, and D495; these read TLGP and DGTTT. Positions 524–546 are disordered; that stretch reads APKDTPAAGQPGGPGAGGPGLDF. The segment covering 533 to 546 has biased composition (gly residues); that stretch reads QPGGPGAGGPGLDF.

The protein belongs to the chaperonin (HSP60) family. Forms a cylinder of 14 subunits composed of two heptameric rings stacked back-to-back. Interacts with the co-chaperonin GroES.

The protein resides in the cytoplasm. It carries out the reaction ATP + H2O + a folded polypeptide = ADP + phosphate + an unfolded polypeptide.. In terms of biological role, together with its co-chaperonin GroES, plays an essential role in assisting protein folding. The GroEL-GroES system forms a nano-cage that allows encapsulation of the non-native substrate proteins and provides a physical environment optimized to promote and accelerate protein folding. This chain is Chaperonin GroEL 4, found in Paraburkholderia xenovorans (strain LB400).